The primary structure comprises 59 residues: Large ribosomal subunit protein uL30 (59 aa).

Belongs to the universal ribosomal protein uL30 family. Part of the 50S ribosomal subunit.

The sequence is that of Large ribosomal subunit protein uL30 from Citrobacter koseri (strain ATCC BAA-895 / CDC 4225-83 / SGSC4696).